The following is a 96-amino-acid chain: Large ribosomal subunit protein eL43 (96 aa).

The C4-type zinc finger occupies 41–62 (CPVCAFPKLKRAGTSIWVCEKC).

Belongs to the eukaryotic ribosomal protein eL43 family. Zn(2+) serves as cofactor.

The chain is Large ribosomal subunit protein eL43 from Methanococcus maripaludis (strain C5 / ATCC BAA-1333).